The chain runs to 320 residues: Cytochrome f (320 aa).

Residues 1-35 (MQTRKTFSWIKEQIARSISVSLLIYIITRTSISSA) form the signal peptide. Tyrosine 36, cysteine 56, cysteine 59, and histidine 60 together coordinate heme. A helical transmembrane segment spans residues 286 to 306 (VQGLLFFLASVILAQIFLVLK).

It belongs to the cytochrome f family. As to quaternary structure, the 4 large subunits of the cytochrome b6-f complex are cytochrome b6, subunit IV (17 kDa polypeptide, petD), cytochrome f and the Rieske protein, while the 4 small subunits are PetG, PetL, PetM and PetN. The complex functions as a dimer. Requires heme as cofactor.

The protein resides in the plastid. It localises to the chloroplast thylakoid membrane. Component of the cytochrome b6-f complex, which mediates electron transfer between photosystem II (PSII) and photosystem I (PSI), cyclic electron flow around PSI, and state transitions. The chain is Cytochrome f from Jasminum nudiflorum (Winter jasmine).